Here is a 191-residue protein sequence, read N- to C-terminus: Lipid A acyltransferase PagP (191 aa).

The first 23 residues, 1 to 23, serve as a signal peptide directing secretion; that stretch reads MRLFYQRISLLISLCGFFSAAWA. Catalysis depends on residues His-62, Asp-105, and Ser-106.

Belongs to the lipid A palmitoyltransferase family. As to quaternary structure, homodimer.

Its subcellular location is the cell outer membrane. The enzyme catalyses a lipid A + a 1,2-diacyl-sn-glycero-3-phosphocholine = a hepta-acyl lipid A + a 2-acyl-sn-glycero-3-phosphocholine. It carries out the reaction a lipid IVA + a 1,2-diacyl-sn-glycero-3-phosphocholine = a lipid IVB + a 2-acyl-sn-glycero-3-phosphocholine. It catalyses the reaction a lipid IIA + a 1,2-diacyl-sn-glycero-3-phosphocholine = a lipid IIB + a 2-acyl-sn-glycero-3-phosphocholine. In terms of biological role, transfers a fatty acid residue from the sn-1 position of a phospholipid to the N-linked hydroxyfatty acid chain on the proximal unit of lipid A or its precursors. The sequence is that of Lipid A acyltransferase PagP from Sodalis glossinidius (strain morsitans).